A 236-amino-acid polypeptide reads, in one-letter code: MPTIVLSLGGSILLPDIDRPNIKPYISVLTRISAKNRLFVVVGGGGTARQYISLARSFEADEAFSDELGIMVTRLNATLLVGALGQAAYPCVVTSHTEALCAAETGKIVVMGGITPGQTTDAVAAVLAERTGADIFINLTAVDGIYSADPRKDPAAKRFETMNPAELLDVVIGQQAVAGVNTVMDIVAVKMVERCGIPLLVMDGRDPALLESTLETGRFVGTLVTRNGKNPFPLKK.

Residue Gly10 to Ser11 coordinates ATP. Gly44 lines the UMP pocket. 2 residues coordinate ATP: Gly45 and Arg49. Residues Asp66 and Ile114 to Thr120 each bind UMP. ATP is bound by residues Thr140, Tyr146, and Asp149.

This sequence belongs to the UMP kinase family. In terms of assembly, homohexamer.

The protein resides in the cytoplasm. The enzyme catalyses UMP + ATP = UDP + ADP. It functions in the pathway pyrimidine metabolism; CTP biosynthesis via de novo pathway; UDP from UMP (UMPK route): step 1/1. Inhibited by UTP. Functionally, catalyzes the reversible phosphorylation of UMP to UDP. The polypeptide is Uridylate kinase (Methanospirillum hungatei JF-1 (strain ATCC 27890 / DSM 864 / NBRC 100397 / JF-1)).